A 203-amino-acid polypeptide reads, in one-letter code: Secreted RxLR effector protein RXLR-C28 (203 aa).

The N-terminal stretch at 1–24 (MKAVKLTAAVVVLFMAPYVPITSS) is a signal peptide. Residue N32 is glycosylated (N-linked (GlcNAc...) asparagine). The RxLR signature appears at 37-40 (RHLR). A glycan (N-linked (GlcNAc...) asparagine) is linked at N193.

The protein belongs to the RxLR effector family.

The protein localises to the secreted. It is found in the host cytoplasm. Secreted effector that does not suppress pattern-triggered immunity (PTI) in plant host. The sequence is that of Secreted RxLR effector protein RXLR-C28 from Plasmopara halstedii (Downy mildew of sunflower).